Reading from the N-terminus, the 831-residue chain is AdoMet-dependent rRNA methyltransferase SPB1 (831 aa).

S-adenosyl-L-methionine contacts are provided by Gly-58, Trp-60, Asp-78, Asp-94, and Asp-119. Lys-159 functions as the Proton acceptor in the catalytic mechanism. Coiled-coil stretches lie at residues 346–389 (LTED…QMNM) and 440–479 (NDIN…ERDA). 2 disordered regions span residues 492–535 (DEGW…ADQR) and 565–645 (MNKK…DQQS). Residues 499–510 (ESDKEGSDKETE) show a composition bias toward basic and acidic residues. Composition is skewed to acidic residues over residues 511 to 526 (ANDY…DDDE), 594 to 611 (MEVD…DSDF), and 618 to 631 (PDEE…DNEN). Residues 632 to 645 (DVSRKYSKAKDQQS) show a composition bias toward basic and acidic residues. A coiled-coil region spans residues 729 to 782 (LEAQGRKKLRALKRLEKLKKKSDMINEDSAKSERDKADEIQKLMKKLTKKQKTK).

Belongs to the class I-like SAM-binding methyltransferase superfamily. RNA methyltransferase RlmE family. SPB1 subfamily. Component of the nucleolar and nucleoplasmic pre-60S ribosomal particle.

It is found in the nucleus. The protein localises to the nucleolus. It catalyses the reaction a ribonucleotide in rRNA + S-adenosyl-L-methionine = a 2'-O-methylribonucleotide in rRNA + S-adenosyl-L-homocysteine + H(+). In terms of biological role, required for proper assembly of pre-ribosomal particles during the biogenesis of the 60S ribosomal subunit. This Debaryomyces hansenii (strain ATCC 36239 / CBS 767 / BCRC 21394 / JCM 1990 / NBRC 0083 / IGC 2968) (Yeast) protein is AdoMet-dependent rRNA methyltransferase SPB1.